The primary structure comprises 77 residues: U8-lycotoxin-Ls1m (77 aa).

A signal peptide spans 1-20 (MKLMIFTGLVLFAIVSLIEA). A propeptide spanning residues 21-26 (QAENEK) is cleaved from the precursor.

Belongs to the neurotoxin 19 (CSTX) family. 08 (U8-Lctx) subfamily. Post-translationally, contains 4 disulfide bonds. Expressed by the venom gland.

The protein resides in the secreted. This chain is U8-lycotoxin-Ls1m, found in Lycosa singoriensis (Wolf spider).